Reading from the N-terminus, the 511-residue chain is GMP synthase [glutamine-hydrolyzing] (511 aa).

The region spanning 5–195 is the Glutamine amidotransferase type-1 domain; sequence AILVLDFGSQ…VFKICQAQIN (191 aa). Catalysis depends on Cys-82, which acts as the Nucleophile. Active-site residues include His-169 and Glu-171. In terms of domain architecture, GMPS ATP-PPase spans 196 to 386; sequence WSLEGNLETI…LGIKKESLYR (191 aa). Position 223–229 (223–229) interacts with ATP; sequence SGGTDSL.

As to quaternary structure, homodimer.

The catalysed reaction is XMP + L-glutamine + ATP + H2O = GMP + L-glutamate + AMP + diphosphate + 2 H(+). It functions in the pathway purine metabolism; GMP biosynthesis; GMP from XMP (L-Gln route): step 1/1. In terms of biological role, catalyzes the synthesis of GMP from XMP. This Borreliella burgdorferi (strain N40) (Borrelia burgdorferi) protein is GMP synthase [glutamine-hydrolyzing] (guaA).